Consider the following 569-residue polypeptide: Urease subunit beta (569 aa).

Positions 131–569 constitute a Urease domain; that stretch reads GGIDTHIHFI…VSLAQLFSIF (439 aa). His-136, His-138, and Lys-219 together coordinate Ni(2+). An N6-carboxylysine modification is found at Lys-219. His-221 provides a ligand contact to substrate. Residues His-248 and His-274 each coordinate Ni(2+). Residue His-322 is the Proton donor of the active site. Asp-362 lines the Ni(2+) pocket.

The protein belongs to the metallo-dependent hydrolases superfamily. Urease alpha subunit family. As to quaternary structure, heterohexamer of 3 UreA (alpha) and 3 UreB (beta) subunits. Requires Ni cation as cofactor. Carboxylation allows a single lysine to coordinate two nickel ions.

Its subcellular location is the cytoplasm. The catalysed reaction is urea + 2 H2O + H(+) = hydrogencarbonate + 2 NH4(+). The protein operates within nitrogen metabolism; urea degradation; CO(2) and NH(3) from urea (urease route): step 1/1. The chain is Urease subunit beta from Helicobacter pylori (strain HPAG1).